The chain runs to 255 residues: Type III pantothenate kinase (255 aa).

Position 6 to 13 (6 to 13) interacts with ATP; sequence DVGNTHIV. Substrate-binding positions include Tyr100 and 107–110; that span reads GADR. The active-site Proton acceptor is the Asp109. Asp129 is a K(+) binding site. Thr132 contacts ATP. Thr184 contacts substrate.

The protein belongs to the type III pantothenate kinase family. In terms of assembly, homodimer. NH4(+) is required as a cofactor. The cofactor is K(+).

The protein resides in the cytoplasm. The enzyme catalyses (R)-pantothenate + ATP = (R)-4'-phosphopantothenate + ADP + H(+). It functions in the pathway cofactor biosynthesis; coenzyme A biosynthesis; CoA from (R)-pantothenate: step 1/5. Its function is as follows. Catalyzes the phosphorylation of pantothenate (Pan), the first step in CoA biosynthesis. This is Type III pantothenate kinase from Ruminiclostridium cellulolyticum (strain ATCC 35319 / DSM 5812 / JCM 6584 / H10) (Clostridium cellulolyticum).